The chain runs to 165 residues: Nucleotide-binding protein PMN2A_1813 (165 aa).

This sequence belongs to the YajQ family.

Nucleotide-binding protein. This is Nucleotide-binding protein PMN2A_1813 from Prochlorococcus marinus (strain NATL2A).